A 109-amino-acid polypeptide reads, in one-letter code: Fluoride-specific ion channel FluC 1 (109 aa).

4 helical membrane-spanning segments follow: residues 1 to 21 (MVIV…YFFS), 29 to 49 (LPLG…VFYN), 55 to 75 (EVYA…STLN), and 87 to 107 (VFYS…FLGI). Gly66 and Thr69 together coordinate Na(+).

The protein belongs to the fluoride channel Fluc/FEX (TC 1.A.43) family.

Its subcellular location is the cell membrane. It carries out the reaction fluoride(in) = fluoride(out). Na(+) is not transported, but it plays an essential structural role and its presence is essential for fluoride channel function. Functionally, fluoride-specific ion channel. Important for reducing fluoride concentration in the cell, thus reducing its toxicity. The chain is Fluoride-specific ion channel FluC 1 from Streptococcus pneumoniae serotype 4 (strain ATCC BAA-334 / TIGR4).